The chain runs to 303 residues: Probable cell division protein WhiA (303 aa).

Residues S272–L303 constitute a DNA-binding region (H-T-H motif).

It belongs to the WhiA family.

Its function is as follows. Involved in cell division and chromosome segregation. This chain is Probable cell division protein WhiA, found in Streptococcus agalactiae serotype Ia (strain ATCC 27591 / A909 / CDC SS700).